Reading from the N-terminus, the 64-residue chain is Cytochrome c oxidase subunit 5C-2 (64 aa).

A helical transmembrane segment spans residues 15–34 (SVVKELIIGLTLGLAAGGLW).

Belongs to the cytochrome c oxidase subunit 5C family.

The protein resides in the mitochondrion inner membrane. This protein is one of the nuclear-coded polypeptide chains of cytochrome c oxidase, the terminal oxidase in mitochondrial electron transport. This is Cytochrome c oxidase subunit 5C-2 from Arabidopsis thaliana (Mouse-ear cress).